The primary structure comprises 194 residues: Protein phosphatase 1 regulatory subunit 1B (194 aa).

Methionine 1 carries the N-acetylmethionine modification. The segment at 1-194 (MDPKDRKKIQ…GEEPQHPSPP (194 aa)) is disordered. Position 34 is a phosphothreonine; by PKA (threonine 34). Over residues 41–63 (VSEHSSPEEEASPHQRTSGEGHH) the composition is skewed to basic and acidic residues. 2 positions are modified to phosphoserine: serine 45 and serine 46. Threonine 75 carries the post-translational modification Phosphothreonine. The span at 84 to 95 (HLQTISNLSENQ) shows a compositional bias: polar residues. A phosphoserine mark is found at serine 97 and serine 130. Residues 113-131 (QEDDEEDEDEEEDEEEDSQ) are compositionally biased toward acidic residues. Over residues 160–170 (PPLDEPQRDGN) the composition is skewed to basic and acidic residues. Serine 192 bears the Phosphoserine mark.

This sequence belongs to the protein phosphatase inhibitor 1 family. Dopamine- and cyclic AMP-regulated neuronal phosphoprotein. In terms of processing, phosphorylation of Thr-34 is required for activity.

It localises to the cytoplasm. Inhibitor of protein-phosphatase 1. The sequence is that of Protein phosphatase 1 regulatory subunit 1B (Ppp1r1b) from Mus musculus (Mouse).